Reading from the N-terminus, the 475-residue chain is Aspartyl/glutamyl-tRNA(Asn/Gln) amidotransferase subunit B (475 aa).

The protein belongs to the GatB/GatE family. GatB subfamily. Heterotrimer of A, B and C subunits.

It catalyses the reaction L-glutamyl-tRNA(Gln) + L-glutamine + ATP + H2O = L-glutaminyl-tRNA(Gln) + L-glutamate + ADP + phosphate + H(+). The enzyme catalyses L-aspartyl-tRNA(Asn) + L-glutamine + ATP + H2O = L-asparaginyl-tRNA(Asn) + L-glutamate + ADP + phosphate + 2 H(+). Functionally, allows the formation of correctly charged Asn-tRNA(Asn) or Gln-tRNA(Gln) through the transamidation of misacylated Asp-tRNA(Asn) or Glu-tRNA(Gln) in organisms which lack either or both of asparaginyl-tRNA or glutaminyl-tRNA synthetases. The reaction takes place in the presence of glutamine and ATP through an activated phospho-Asp-tRNA(Asn) or phospho-Glu-tRNA(Gln). The chain is Aspartyl/glutamyl-tRNA(Asn/Gln) amidotransferase subunit B from Trichlorobacter lovleyi (strain ATCC BAA-1151 / DSM 17278 / SZ) (Geobacter lovleyi).